The following is a 318-amino-acid chain: MTSIVFMGTPQFSVPILEALVANDYQILAVVTQPDRKVGRKQVLQQTPVKEAAVRLDLPVFQPEKLSGSPELADVIALQPDLIVTAAYGQFLPTKLLEAAKIAAINVHGSLLPKYRGGAPIQYAVLNGDSEIGITIMHMAKKMDAGDMIEQASIPIEATDDTGSLFDKLSYVGRDLLLKTLPGIIAQTAPRTPQDEVQVTFAYNITKEQEQLDINQPAEQLLNQIRALRPQPGAWLAVNGQRTKIWQATVAETTTDQAAGVVVALNKKDFELAAGNGTVLKITEIQPAGKAKMPVQSYLNGVGKQLAVGQQVVVQDAE.

110–113 (SLLP) is a binding site for (6S)-5,6,7,8-tetrahydrofolate.

This sequence belongs to the Fmt family.

The catalysed reaction is L-methionyl-tRNA(fMet) + (6R)-10-formyltetrahydrofolate = N-formyl-L-methionyl-tRNA(fMet) + (6S)-5,6,7,8-tetrahydrofolate + H(+). In terms of biological role, attaches a formyl group to the free amino group of methionyl-tRNA(fMet). The formyl group appears to play a dual role in the initiator identity of N-formylmethionyl-tRNA by promoting its recognition by IF2 and preventing the misappropriation of this tRNA by the elongation apparatus. The protein is Methionyl-tRNA formyltransferase of Latilactobacillus sakei subsp. sakei (strain 23K) (Lactobacillus sakei subsp. sakei).